The sequence spans 548 residues: 4-coumarate--CoA ligase CCL1 (548 aa).

ATP-binding positions include serine 195 to lysine 203, glutamine 337 to threonine 342, aspartate 426, isoleucine 438 to arginine 441, and lysine 532. The segment at glutamate 268 to glutamine 337 is SBD1. The segment at glycine 338 to tyrosine 405 is SBD2.

The protein belongs to the ATP-dependent AMP-binding enzyme family. Mostly expressed in glandular trichomes (lupulin glands) after flowering, and, to a lower extent, in stems, leaves, cones and flowers.

It localises to the cytoplasm. The enzyme catalyses (E)-4-coumarate + ATP + CoA = (E)-4-coumaroyl-CoA + AMP + diphosphate. The protein operates within secondary metabolite biosynthesis. Its function is as follows. Involved in the biosynthesis of prenylated phenolics natural products which contribute to the bitter taste of beer and display broad biological activities. Catalyzes the ligation of CoA on (E)-4-coumarate to produce (E)-4-coumaroyl-CoA. The sequence is that of 4-coumarate--CoA ligase CCL1 from Humulus lupulus (European hop).